A 278-amino-acid chain; its full sequence is Envelope glycoprotein L (278 aa).

An N-terminal signal peptide occupies residues 1–30; sequence MCRRPDCGFSFSPGPVILLWCCLLLPIVSS. The region spanning 43 to 256 is the gL betaherpesvirus-type domain; sequence VPAECPELTR…DKYYAGLPPE (214 aa). A disulfide bridge connects residues cysteine 154 and cysteine 159.

This sequence belongs to the herpesviridae glycoprotein L (gL) family. Betaherpesvirinae gL subfamily. Interacts with glycoprotein H (gH); this interaction is necessary for the correct processing and cell surface expression of gH. Forms the envelope pentamer complex (PC) composed of gH, gL, UL128, UL130, and UL131A. The pentamer interacts with host NRP2. Forms the envelope trimer complex composed of gH, gL, and gO. The trimer interacts with host PDGFRA. The trimer also interacts with host EPHA2.

It localises to the virion membrane. The protein resides in the host cell membrane. Its subcellular location is the host Golgi apparatus. It is found in the host trans-Golgi network. Functionally, the heterodimer glycoprotein H-glycoprotein L is required for the fusion of viral and plasma membranes leading to virus entry into the host cell. Acts as a functional inhibitor of gH and maintains gH in an inhibited form. Upon binding to host integrins, gL dissociates from gH leading to activation of the viral fusion glycoproteins gB and gH. In human cytomegalovirus, forms two distincts complexes to mediate viral entry, a trimer and a pentamer at the surface of the virion envelope. The gH-gL-gO trimer is required for infection in fibroblasts by interacting with host PDGFRA, and in glioblastoma cells by interacting with host EPHA2. The gH-gL-UL128-UL130-UL131A pentamer is essential for viral entry in epithelial, endothelial and myeloid cells via interaction with host NRP2. The protein is Envelope glycoprotein L of Human cytomegalovirus (strain 5035) (HHV-5).